The sequence spans 317 residues: Malate dehydrogenase (317 aa).

Residues 10–15 and D34 each bind NAD(+); that span reads GGGQIG. The substrate site is built by R83 and R89. Residues N96 and 119 to 121 contribute to the NAD(+) site; that span reads ISN. Substrate is bound by residues N121 and R152. Catalysis depends on H176, which acts as the Proton acceptor.

The protein belongs to the LDH/MDH superfamily. MDH type 3 family.

It catalyses the reaction (S)-malate + NAD(+) = oxaloacetate + NADH + H(+). Its function is as follows. Catalyzes the reversible oxidation of malate to oxaloacetate. The chain is Malate dehydrogenase from Geobacter sulfurreducens (strain ATCC 51573 / DSM 12127 / PCA).